A 307-amino-acid chain; its full sequence is N-acetylmuramic acid 6-phosphate etherase 2 (307 aa).

One can recognise an SIS domain in the interval 62–225 (ITAAFKQGGR…TTASMIRLGK (164 aa)). Glu90 (proton donor) is an active-site residue. Residue Glu121 is part of the active site.

The protein belongs to the GCKR-like family. MurNAc-6-P etherase subfamily. In terms of assembly, homodimer.

It carries out the reaction N-acetyl-D-muramate 6-phosphate + H2O = N-acetyl-D-glucosamine 6-phosphate + (R)-lactate. The protein operates within amino-sugar metabolism; 1,6-anhydro-N-acetylmuramate degradation. It participates in amino-sugar metabolism; N-acetylmuramate degradation. It functions in the pathway cell wall biogenesis; peptidoglycan recycling. In terms of biological role, specifically catalyzes the cleavage of the D-lactyl ether substituent of MurNAc 6-phosphate, producing GlcNAc 6-phosphate and D-lactate. Together with AnmK, is also required for the utilization of anhydro-N-acetylmuramic acid (anhMurNAc) either imported from the medium or derived from its own cell wall murein, and thus plays a role in cell wall recycling. The chain is N-acetylmuramic acid 6-phosphate etherase 2 from Vibrio cholerae serotype O1 (strain ATCC 39315 / El Tor Inaba N16961).